We begin with the raw amino-acid sequence, 82 residues long: MARKPKESSTVDFETTLNQLETIVTRLEAGDLPLEEALKEFENGIKLAKLGQERLQQAEQRIQILLQKSDTAELTDYQPTDE.

The protein belongs to the XseB family. Heterooligomer composed of large and small subunits.

The protein localises to the cytoplasm. The catalysed reaction is Exonucleolytic cleavage in either 5'- to 3'- or 3'- to 5'-direction to yield nucleoside 5'-phosphates.. Bidirectionally degrades single-stranded DNA into large acid-insoluble oligonucleotides, which are then degraded further into small acid-soluble oligonucleotides. This is Exodeoxyribonuclease 7 small subunit from Mannheimia succiniciproducens (strain KCTC 0769BP / MBEL55E).